The chain runs to 147 residues: Deoxyuridine 5'-triphosphate nucleotidohydrolase (147 aa).

Substrate contacts are provided by residues 68–70 (RSG), Asn-81, and 85–87 (TID).

It belongs to the dUTPase family. Mg(2+) serves as cofactor.

It catalyses the reaction dUTP + H2O = dUMP + diphosphate + H(+). It functions in the pathway pyrimidine metabolism; dUMP biosynthesis; dUMP from dCTP (dUTP route): step 2/2. In terms of biological role, this enzyme is involved in nucleotide metabolism: it produces dUMP, the immediate precursor of thymidine nucleotides and it decreases the intracellular concentration of dUTP so that uracil cannot be incorporated into DNA. The sequence is that of Deoxyuridine 5'-triphosphate nucleotidohydrolase from Solibacter usitatus (strain Ellin6076).